The sequence spans 204 residues: RNA-free ribonuclease P (204 aa).

Belongs to the HARP family.

It catalyses the reaction Endonucleolytic cleavage of RNA, removing 5'-extranucleotides from tRNA precursor.. RNA-free RNase P that catalyzes the removal of the 5'-leader sequence from pre-tRNA to produce the mature 5'-terminus. This is RNA-free ribonuclease P from Pyrococcus horikoshii (strain ATCC 700860 / DSM 12428 / JCM 9974 / NBRC 100139 / OT-3).